The primary structure comprises 388 residues: Quinolone resistance protein NorA (388 aa).

A run of 12 helical transmembrane segments spans residues 5–25 (IFVL…VIPV), 42–62 (LLVA…GTLA), 69–89 (LIIC…AVGH), 99–119 (VIGG…IADI), 129–149 (FGYM…IGGF), 157–177 (MPFY…IVLI), 201–221 (WKVF…LSAF), 239–259 (DISI…IYFF), 269–289 (LTFI…LVFA), 293–313 (WSIM…RPAI), 331–351 (LNST…GALF), and 355–375 (IEAP…IVLI).

The protein belongs to the major facilitator superfamily. TCR/Tet family.

The protein resides in the cell membrane. Involved in quinolone resistance. May constitute a membrane-associated active efflux pump of hydrophilic quinolones. This chain is Quinolone resistance protein NorA (norA), found in Staphylococcus aureus (strain COL).